Here is a 262-residue protein sequence, read N- to C-terminus: Phosphonates import ATP-binding protein PhnC 3 (262 aa).

The 243-residue stretch at 3–245 (IQLECLSVTY…ELNRIYGNAE (243 aa)) folds into the ABC transporter domain. Residue 36 to 43 (GASGSGKS) coordinates ATP.

This sequence belongs to the ABC transporter superfamily. Phosphonates importer (TC 3.A.1.9.1) family. As to quaternary structure, the complex is composed of two ATP-binding proteins (PhnC), two transmembrane proteins (PhnE) and a solute-binding protein (PhnD).

The protein resides in the cell inner membrane. The catalysed reaction is phosphonate(out) + ATP + H2O = phosphonate(in) + ADP + phosphate + H(+). Functionally, part of the ABC transporter complex PhnCDE involved in phosphonates import. Responsible for energy coupling to the transport system. The polypeptide is Phosphonates import ATP-binding protein PhnC 3 (Nostoc sp. (strain PCC 7120 / SAG 25.82 / UTEX 2576)).